Here is a 319-residue protein sequence, read N- to C-terminus: tRNA uridine(34) hydroxylase (319 aa).

Positions 127–221 (KQEDTVIIDA…YGKDPEVQGE (95 aa)) constitute a Rhodanese domain. Cys181 functions as the Cysteine persulfide intermediate in the catalytic mechanism.

This sequence belongs to the TrhO family.

It catalyses the reaction uridine(34) in tRNA + AH2 + O2 = 5-hydroxyuridine(34) in tRNA + A + H2O. Catalyzes oxygen-dependent 5-hydroxyuridine (ho5U) modification at position 34 in tRNAs. In Bacillus mycoides (strain KBAB4) (Bacillus weihenstephanensis), this protein is tRNA uridine(34) hydroxylase.